Here is a 471-residue protein sequence, read N- to C-terminus: Ribulose bisphosphate carboxylase large chain (471 aa).

Substrate contacts are provided by N119 and T169. The active-site Proton acceptor is the K171. K173 contacts substrate. K197, D199, and E200 together coordinate Mg(2+). Residue K197 is modified to N6-carboxylysine. The active-site Proton acceptor is H290. Residues R291, H323, and S375 each coordinate substrate.

Belongs to the RuBisCO large chain family. Type I subfamily. As to quaternary structure, heterohexadecamer of 8 large chains and 8 small chains; disulfide-linked. The disulfide link is formed within the large subunit homodimers. Mg(2+) is required as a cofactor. In terms of processing, the disulfide bond which can form in the large chain dimeric partners within the hexadecamer appears to be associated with oxidative stress and protein turnover.

It is found in the carboxysome. The catalysed reaction is 2 (2R)-3-phosphoglycerate + 2 H(+) = D-ribulose 1,5-bisphosphate + CO2 + H2O. It catalyses the reaction D-ribulose 1,5-bisphosphate + O2 = 2-phosphoglycolate + (2R)-3-phosphoglycerate + 2 H(+). Functionally, ruBisCO catalyzes two reactions: the carboxylation of D-ribulose 1,5-bisphosphate, the primary event in carbon dioxide fixation, as well as the oxidative fragmentation of the pentose substrate in the photorespiration process. Both reactions occur simultaneously and in competition at the same active site. This is Ribulose bisphosphate carboxylase large chain from Microcystis aeruginosa (strain NIES-843 / IAM M-2473).